Reading from the N-terminus, the 347-residue chain is KIN17-like protein KLP (347 aa).

A Nuclear localization signal (NLS) motif is present at residues 222–225 (KRKR).

Belongs to the KIN17 family.

The protein localises to the cytoplasm. It is found in the nucleus. In terms of biological role, may act as repressor of root growth during copper excess and of hypocotyl growth in the dark. The sequence is that of KIN17-like protein KLP from Arabidopsis thaliana (Mouse-ear cress).